The primary structure comprises 263 residues: Hydroxyacylglutathione hydrolase (263 aa).

7 residues coordinate Zn(2+): H55, H57, D59, H60, H117, D134, and H172.

It belongs to the metallo-beta-lactamase superfamily. Glyoxalase II family. Monomer. Zn(2+) serves as cofactor.

The enzyme catalyses an S-(2-hydroxyacyl)glutathione + H2O = a 2-hydroxy carboxylate + glutathione + H(+). The protein operates within secondary metabolite metabolism; methylglyoxal degradation; (R)-lactate from methylglyoxal: step 2/2. Functionally, thiolesterase that catalyzes the hydrolysis of S-D-lactoyl-glutathione to form glutathione and D-lactic acid. In Shewanella baltica (strain OS195), this protein is Hydroxyacylglutathione hydrolase.